Here is a 132-residue protein sequence, read N- to C-terminus: Replication enhancer protein (132 aa).

Belongs to the geminiviridae replication enhancer protein family. In terms of assembly, homooligomer. Interacts with the replication-associated protein (REP). Interacts with host proliferating cell nuclear antigen (PCNA). Interacts with host retinoblastoma-related protein 1 (RBR1), and may thereby deregulate the host cell cycle. Oligomerization and interaction with PCNA are necessary for optimal replication enhancement.

Increases viral DNA accumulation. Enhances infectivity and symptom expression. This chain is Replication enhancer protein, found in Tomato mottle virus (isolate Florida) (ToMoV).